We begin with the raw amino-acid sequence, 260 residues long: DNA-directed RNA polymerase subunit Rpo3 (260 aa).

It belongs to the archaeal Rpo3/eukaryotic RPB3 RNA polymerase subunit family. As to quaternary structure, part of the RNA polymerase complex.

It localises to the cytoplasm. The enzyme catalyses RNA(n) + a ribonucleoside 5'-triphosphate = RNA(n+1) + diphosphate. In terms of biological role, DNA-dependent RNA polymerase (RNAP) catalyzes the transcription of DNA into RNA using the four ribonucleoside triphosphates as substrates. The sequence is that of DNA-directed RNA polymerase subunit Rpo3 from Pyrobaculum aerophilum (strain ATCC 51768 / DSM 7523 / JCM 9630 / CIP 104966 / NBRC 100827 / IM2).